The following is a 497-amino-acid chain: Xylooligosaccharide oxidase (497 aa).

An N-terminal signal peptide occupies residues 1–16 (MHLLPLTVSATAVVSA). Cys-30 and Cys-79 are joined by a disulfide. N-linked (GlcNAc...) asparagine glycosylation is found at Asn-42 and Asn-117. An FAD-binding PCMH-type domain is found at 57–230 (LPYTPAAIAK…ASFRFKTFAA (174 aa)). Residues 94-155 (HSYASFGLGG…GKRAFSHGTC (62 aa)) constitute a cross-link (6-(S-cysteinyl)-8alpha-(pros-histidyl)-FAD (His-Cys)). Residue Thr-154 coordinates substrate. N-linked (GlcNAc...) asparagine glycans are attached at residues Asn-192, Asn-233, and Asn-245. A substrate-binding site is contributed by Arg-272. N-linked (GlcNAc...) asparagine glycans are attached at residues Asn-289 and Asn-307. Substrate is bound by residues Glu-412 and Tyr-451.

The protein belongs to the oxygen-dependent FAD-linked oxidoreductase family. Requires FAD as cofactor. Post-translationally, the FAD cofactor is bound via a bicovalent 6-S-cysteinyl, 8alpha-N1-histidyl FAD linkage.

The protein localises to the secreted. It catalyses the reaction D-xylobiose + O2 = D-xylobiono-1,5-lactone + H2O2. It carries out the reaction D-xylotriose + O2 = D-xylotriono-1,5-lactone + H2O2. The catalysed reaction is D-xylotetraose + O2 = D-xylotetraono-1,5-lactone + H2O2. Its function is as follows. Catalyzes the selective oxidation of C1 hydroxyl moieties on mono-, oligo- and polysaccharides with concomitant reduction of molecular oxygen to hydrogen peroxide. This results in the formation of the corresponding lactones, which typically undergo spontaneous hydrolysis. Xylooligosaccharide oxidase is able to oxidize a variety of substrates including D-xylose, D-cellobiose, lactose and arabinose. The enzyme acts primarily on xylooligosaccharides, indicating that it prefers pentose-based oligosaccharides over hexose-based oligosaccharides. This Thermothelomyces thermophilus (strain ATCC 42464 / BCRC 31852 / DSM 1799) (Sporotrichum thermophile) protein is Xylooligosaccharide oxidase.